A 419-amino-acid polypeptide reads, in one-letter code: Tyrosine--tRNA ligase (419 aa).

Y34 is an L-tyrosine binding site. A 'HIGH' region motif is present at residues 39-48; it reads PTADSLHLGN. Y169 and Q173 together coordinate L-tyrosine. Positions 229 to 233 match the 'KMSKS' region motif; it reads KFGKS. Position 232 (K232) interacts with ATP. Residues 353-419 form the S4 RNA-binding domain; it reads LTLIELLISV…GKKKNFVLTY (67 aa).

The protein belongs to the class-I aminoacyl-tRNA synthetase family. TyrS type 1 subfamily. As to quaternary structure, homodimer.

The protein localises to the cytoplasm. It catalyses the reaction tRNA(Tyr) + L-tyrosine + ATP = L-tyrosyl-tRNA(Tyr) + AMP + diphosphate + H(+). Catalyzes the attachment of tyrosine to tRNA(Tyr) in a two-step reaction: tyrosine is first activated by ATP to form Tyr-AMP and then transferred to the acceptor end of tRNA(Tyr). The protein is Tyrosine--tRNA ligase of Lactococcus lactis subsp. cremoris (strain MG1363).